A 157-amino-acid polypeptide reads, in one-letter code: Protein NrdI (157 aa).

The protein belongs to the NrdI family.

Its function is as follows. Probably involved in ribonucleotide reductase function. In Mycoplasma capricolum subsp. capricolum (strain California kid / ATCC 27343 / NCTC 10154), this protein is Protein NrdI.